The chain runs to 512 residues: Maturase K (512 aa).

This sequence belongs to the intron maturase 2 family. MatK subfamily.

It is found in the plastid. The protein resides in the chloroplast. Functionally, usually encoded in the trnK tRNA gene intron. Probably assists in splicing its own and other chloroplast group II introns. The chain is Maturase K from Lemna gibba (Swollen duckweed).